A 311-amino-acid chain; its full sequence is Probable manganese-dependent inorganic pyrophosphatase (311 aa).

Residues H9, D13, D15, D75, H97, and D149 each contribute to the Mn(2+) site.

The protein belongs to the PPase class C family. It depends on Mn(2+) as a cofactor.

The protein resides in the cytoplasm. The enzyme catalyses diphosphate + H2O = 2 phosphate + H(+). The protein is Probable manganese-dependent inorganic pyrophosphatase of Lactobacillus johnsonii (strain CNCM I-12250 / La1 / NCC 533).